Here is a 531-residue protein sequence, read N- to C-terminus: Peptide chain release factor 3 (531 aa).

The 269-residue stretch at Arg10–Lys278 folds into the tr-type G domain. GTP contacts are provided by residues Ser19–Thr26, Asp87–His91, and Asn141–Asp144.

It belongs to the TRAFAC class translation factor GTPase superfamily. Classic translation factor GTPase family. PrfC subfamily.

Its subcellular location is the cytoplasm. Increases the formation of ribosomal termination complexes and stimulates activities of RF-1 and RF-2. It binds guanine nucleotides and has strong preference for UGA stop codons. It may interact directly with the ribosome. The stimulation of RF-1 and RF-2 is significantly reduced by GTP and GDP, but not by GMP. The protein is Peptide chain release factor 3 of Neisseria gonorrhoeae (strain NCCP11945).